We begin with the raw amino-acid sequence, 700 residues long: Methionine--tRNA ligase (700 aa).

A 'HIGH' region motif is present at residues 12–22 (PYANGNFHIGH). Residues C143, C146, C156, and C159 each contribute to the Zn(2+) site. Residues 348-352 (KMSKS) carry the 'KMSKS' region motif. K351 contributes to the ATP binding site. Residues 594-700 (DFSKIDLRIA…AGAQPGMRVH (107 aa)) enclose the tRNA-binding domain.

Belongs to the class-I aminoacyl-tRNA synthetase family. MetG type 1 subfamily. Homodimer. The cofactor is Zn(2+).

The protein localises to the cytoplasm. The enzyme catalyses tRNA(Met) + L-methionine + ATP = L-methionyl-tRNA(Met) + AMP + diphosphate. In terms of biological role, is required not only for elongation of protein synthesis but also for the initiation of all mRNA translation through initiator tRNA(fMet) aminoacylation. This Albidiferax ferrireducens (strain ATCC BAA-621 / DSM 15236 / T118) (Rhodoferax ferrireducens) protein is Methionine--tRNA ligase.